We begin with the raw amino-acid sequence, 749 residues long: Subtilisin-like protease SBT4.14 (749 aa).

An N-terminal signal peptide occupies residues 1–28 (MIRSKCSCHHHLLVLVMVVLWISPRYAS). A propeptide spans 29–115 (AEDEHAKDFY…VSRNQYRKLH (87 aa)) (activation peptide). An Inhibitor I9 domain is found at 38–115 (YIIYLGDRPD…VSRNQYRKLH (78 aa)). Residues 119 to 595 (SWDFVGLPLT…GGQINPRRAA (477 aa)) form the Peptidase S8 domain. D145 serves as the catalytic Charge relay system. N176 carries an N-linked (GlcNAc...) asparagine glycan. Residue H210 is the Charge relay system of the active site. Residues N225, N233, N446, and N458 are each glycosylated (N-linked (GlcNAc...) asparagine). S536 (charge relay system) is an active-site residue. N618 carries N-linked (GlcNAc...) asparagine glycosylation.

Belongs to the peptidase S8 family. Post-translationally, the C-terminal propeptide is autocleaved. Expressed only in roots, particularly in xylem.

The sequence is that of Subtilisin-like protease SBT4.14 from Arabidopsis thaliana (Mouse-ear cress).